Consider the following 337-residue polypeptide: Probable E3 ubiquitin-protein ligase LUL1 (337 aa).

G2 carries the N-myristoyl glycine lipid modification. The segment at 139-255 is DAR2 domain; sequence FTFDASMPGR…GEIKIEVVKQ (117 aa). The segment at 285-324 adopts an RING-type; atypical zinc-finger fold; it reads CVVCLSEPRDTTVLPCRHMCMCSGCAKALRFQTNLCPVCR.

This sequence belongs to the RING-type zinc finger family. LOG2 subfamily. Myristoylated (in vitro).

The catalysed reaction is S-ubiquitinyl-[E2 ubiquitin-conjugating enzyme]-L-cysteine + [acceptor protein]-L-lysine = [E2 ubiquitin-conjugating enzyme]-L-cysteine + N(6)-ubiquitinyl-[acceptor protein]-L-lysine.. The protein operates within protein modification; protein ubiquitination. In terms of biological role, acts as an E3 ubiquitin-protein ligase, or as part of E3 complex, which accepts ubiquitin from specific E2 ubiquitin-conjugating enzymes and then transfers it to substrates (in vitro). In Arabidopsis thaliana (Mouse-ear cress), this protein is Probable E3 ubiquitin-protein ligase LUL1 (LUL1).